We begin with the raw amino-acid sequence, 142 residues long: Large ribosomal subunit protein uL13 (142 aa).

This sequence belongs to the universal ribosomal protein uL13 family. Part of the 50S ribosomal subunit.

Its function is as follows. This protein is one of the early assembly proteins of the 50S ribosomal subunit, although it is not seen to bind rRNA by itself. It is important during the early stages of 50S assembly. The chain is Large ribosomal subunit protein uL13 from Dictyoglomus thermophilum (strain ATCC 35947 / DSM 3960 / H-6-12).